Reading from the N-terminus, the 279-residue chain is Tryptophan 2,3-dioxygenase (279 aa).

Residues 48 to 52 (FIVIH), Tyr-110, and Arg-114 contribute to the substrate site. His-237 contacts heme. Thr-251 contacts substrate.

The protein belongs to the tryptophan 2,3-dioxygenase family. Homotetramer. It depends on heme as a cofactor.

The enzyme catalyses L-tryptophan + O2 = N-formyl-L-kynurenine. Its pathway is amino-acid degradation; L-tryptophan degradation via kynurenine pathway; L-kynurenine from L-tryptophan: step 1/2. Functionally, heme-dependent dioxygenase that catalyzes the oxidative cleavage of the L-tryptophan (L-Trp) pyrrole ring and converts L-tryptophan to N-formyl-L-kynurenine. Catalyzes the oxidative cleavage of the indole moiety. In Bacillus cereus (strain ZK / E33L), this protein is Tryptophan 2,3-dioxygenase.